We begin with the raw amino-acid sequence, 256 residues long: Small ribosomal subunit protein eS1 (256 aa).

Basic residues predominate over residues 1-18 (MAVGKNKRLSKGKKGVKK). The segment at 1–21 (MAVGKNKRLSKGKKGVKKRTV) is disordered. A2 is subject to N-acetylalanine; partial.

Belongs to the eukaryotic ribosomal protein eS1 family. Component of the small ribosomal subunit. Mature ribosomes consist of a small (40S) and a large (60S) subunit. The 40S subunit contains about 33 different proteins and 1 molecule of RNA (18S). The 60S subunit contains about 49 different proteins and 3 molecules of RNA (25S, 5.8S and 5S).

The protein resides in the cytoplasm. The protein is Small ribosomal subunit protein eS1 (rps1) of Aspergillus niger (strain ATCC MYA-4892 / CBS 513.88 / FGSC A1513).